The chain runs to 618 residues: Glucose starvation modulator protein 1 (618 aa).

The segment at residues 20–48 (CEFCHTKHIQCDVGRPCQNCLKRNIGKFC) is a DNA-binding region (zn(2)-C6 fungal-type). Positions 325 to 352 (ANANTHPSHNAKLESECDSSSHSDADLE) are disordered. Basic and acidic residues predominate over residues 335 to 352 (AKLESECDSSSHSDADLE). Residues 466–538 (LLDLENMAKL…QIFNELLAFG (73 aa)) form the PAS domain.

Belongs to the ERT1/acuK family.

The protein localises to the nucleus. Transcription factor which regulates nonfermentable carbon utilization. Binds specifically to 5'-CGGN(8)CGG-3' and 5'-CGGN(9)CGG-3' sequences in the promoter region. The chain is Glucose starvation modulator protein 1 (GSM1) from Saccharomyces cerevisiae (strain ATCC 204508 / S288c) (Baker's yeast).